A 44-amino-acid polypeptide reads, in one-letter code: MADKPDMGEIASFDKAKLKKTETQEKNTLPTKETIEQEKRSEIS.

Basic and acidic residues-rich tracts occupy residues 1-25 and 33-44; these read MADK…ETQE and ETIEQEKRSEIS. Positions 1–44 are disordered; the sequence is MADKPDMGEIASFDKAKLKKTETQEKNTLPTKETIEQEKRSEIS. Residue Ala2 is modified to N-acetylalanine. An N6-acetyllysine modification is found at Lys4. A Phosphoserine modification is found at Ser12. Lys15 is modified (N6-acetyllysine). 3 positions are modified to phosphothreonine: Thr21, Thr23, and Thr34. N6-acetyllysine is present on Lys39. Phosphoserine is present on Ser41.

The protein belongs to the thymosin beta family.

The protein resides in the cytoplasm. It localises to the cytoskeleton. Functionally, plays an important role in the organization of the cytoskeleton. Binds to and sequesters actin monomers (G actin) and therefore inhibits actin polymerization. This is Thymosin beta-10 (Tmsb10) from Rattus norvegicus (Rat).